The primary structure comprises 485 residues: dTDP-4-amino-4,6-dideoxy-D-glucose ammonia-lyase (485 aa).

[4Fe-4S] cluster contacts are provided by cysteine 141, cysteine 145, and cysteine 148.

The protein belongs to the radical SAM superfamily. DesII family. In terms of assembly, monomer. The cofactor is [4Fe-4S] cluster.

The enzyme catalyses dTDP-4-amino-4,6-dideoxy-alpha-D-glucose + AH2 + S-adenosyl-L-methionine = dTDP-3-dehydro-4,6-dideoxy-alpha-D-glucose + 5'-deoxyadenosine + L-methionine + A + NH4(+) + H(+). Its function is as follows. Involved in the biosynthesis of dTDP-alpha-D-desosamine, a sugar found in several bacterial macrolide antibiotics. Catalyzes the SAM-dependent deamination of dTDP-4-amino-4,6-deoxyglucose (dTDP-viosamine) to yield dTDP-3-keto-4,6-deoxyglucose. It can also catalyze the oxidative dehydrogenation of the non-physiological substrate dTDP-D-quinovose to dTDP-3-keto-6-deoxy-d-glucose. It can also deaminate dTDP-3-amino-3,6-deoxyglucose. The sequence is that of dTDP-4-amino-4,6-dideoxy-D-glucose ammonia-lyase from Streptomyces venezuelae.